The chain runs to 177 residues: Adenine phosphoribosyltransferase (177 aa).

It belongs to the purine/pyrimidine phosphoribosyltransferase family. Homodimer.

Its subcellular location is the cytoplasm. It carries out the reaction AMP + diphosphate = 5-phospho-alpha-D-ribose 1-diphosphate + adenine. Its pathway is purine metabolism; AMP biosynthesis via salvage pathway; AMP from adenine: step 1/1. In terms of biological role, catalyzes a salvage reaction resulting in the formation of AMP, that is energically less costly than de novo synthesis. This Acidothermus cellulolyticus (strain ATCC 43068 / DSM 8971 / 11B) protein is Adenine phosphoribosyltransferase.